The primary structure comprises 460 residues: Glycogen synthase (460 aa).

An ADP-alpha-D-glucose-binding site is contributed by Lys-15.

This sequence belongs to the glycosyltransferase 1 family. Bacterial/plant glycogen synthase subfamily.

It carries out the reaction [(1-&gt;4)-alpha-D-glucosyl](n) + ADP-alpha-D-glucose = [(1-&gt;4)-alpha-D-glucosyl](n+1) + ADP + H(+). It functions in the pathway glycan biosynthesis; glycogen biosynthesis. Its function is as follows. Synthesizes alpha-1,4-glucan chains using ADP-glucose. The protein is Glycogen synthase of Trichodesmium erythraeum (strain IMS101).